We begin with the raw amino-acid sequence, 106 residues long: Met repressor (106 aa).

It belongs to the MetJ family. Homodimer.

It localises to the cytoplasm. In terms of biological role, this regulatory protein, when combined with SAM (S-adenosylmethionine) represses the expression of the methionine regulon and of enzymes involved in SAM synthesis. This Vibrio campbellii (strain ATCC BAA-1116) protein is Met repressor.